A 502-amino-acid chain; its full sequence is Glycerol kinase (502 aa).

Residue threonine 12 coordinates ADP. ATP-binding residues include threonine 12, threonine 13, and serine 14. Sn-glycerol 3-phosphate is bound at residue threonine 12. An ADP-binding site is contributed by arginine 16. Sn-glycerol 3-phosphate-binding residues include arginine 82, glutamate 83, tyrosine 134, and aspartate 243. Residues arginine 82, glutamate 83, tyrosine 134, aspartate 243, and glutamine 244 each coordinate glycerol. ADP contacts are provided by threonine 265 and glycine 308. Residues threonine 265, glycine 308, glutamine 312, and glycine 412 each contribute to the ATP site. ADP is bound at residue glycine 412.

This sequence belongs to the FGGY kinase family.

It catalyses the reaction glycerol + ATP = sn-glycerol 3-phosphate + ADP + H(+). It participates in polyol metabolism; glycerol degradation via glycerol kinase pathway; sn-glycerol 3-phosphate from glycerol: step 1/1. Inhibited by fructose 1,6-bisphosphate (FBP). Key enzyme in the regulation of glycerol uptake and metabolism. Catalyzes the phosphorylation of glycerol to yield sn-glycerol 3-phosphate. The polypeptide is Glycerol kinase (Methylobacterium nodulans (strain LMG 21967 / CNCM I-2342 / ORS 2060)).